The chain runs to 419 residues: Peptide chain release factor subunit 1 (419 aa).

The protein belongs to the eukaryotic release factor 1 family. In terms of assembly, heterodimer of two subunits, one of which binds GTP.

The protein localises to the cytoplasm. Its function is as follows. Directs the termination of nascent peptide synthesis (translation) in response to the termination codons UAA, UAG and UGA. The protein is Peptide chain release factor subunit 1 of Methanococcus maripaludis (strain C7 / ATCC BAA-1331).